The sequence spans 375 residues: CCN family member 1 (375 aa).

The N-terminal stretch at 1–22 (MGSAGARPALAAALLCLARLAL) is a signal peptide. In terms of domain architecture, IGFBP N-terminal spans 23–94 (GSPCPAVCQC…AATNGICRAQ (72 aa)). Cystine bridges form between Cys26/Cys50, Cys30/Cys52, Cys32/Cys53, Cys39/Cys56, Cys64/Cys78, and Cys70/Cys91. The VWFC domain maps to 98-164 (RPCEYNSKIY…GQCCEEWVCD (67 aa)). In terms of domain architecture, TSP type-1 spans 223–268 (KCIVQTTSWSQCSKTCGTGISTRVTNDNPDCKLIKETRICEVRPCG). A heparin-binding region spans residues 274–310 (SLKKGKKCTKTKKSPSPVRFTYAGCSSVKKYRPKYCG). 5 cysteine pairs are disulfide-bonded: Cys281–Cys318, Cys298–Cys332, Cys309–Cys348, Cys312–Cys350, and Cys317–Cys354. Residues 281–355 (CTKTKKSPSP…QSCRCNYNCP (75 aa)) enclose the CTCK domain.

This sequence belongs to the CCN family.

The protein localises to the secreted. Its function is as follows. Probable secreted regulatory protein. The chain is CCN family member 1 (CCN1) from Gallus gallus (Chicken).